The following is a 76-amino-acid chain: Histone H2A (76 aa).

The segment at M1–G23 is disordered. S2 bears the N-acetylserine; in acipensins mark. S2 is modified (N-acetylserine; in histone H2A). S2 carries the phosphoserine; in histone H2A modification. N6-(2-hydroxyisobutyryl)lysine is present on K6. Residue K6 is modified to N6-acetyllysine; in histone H2A. The segment covering T7 to S19 has biased composition (basic residues). N6-(2-hydroxyisobutyryl)lysine; alternate is present on K10. K10 bears the N6-lactoyllysine; alternate mark. K10 is subject to N6-succinyllysine. Glycyl lysine isopeptide (Lys-Gly) (interchain with G-Cter in ubiquitin); in histone H2A cross-links involve residues K14 and K16. An N6-(2-hydroxyisobutyryl)lysine; alternate modification is found at K37. Residues K65 and K66 each carry the N6-(2-hydroxyisobutyryl)lysine modification.

The protein belongs to the histone H2A family. As to quaternary structure, the nucleosome is a histone octamer containing two molecules each of H2A, H2B, H3 and H4 assembled in one H3-H4 heterotetramer and two H2A-H2B heterodimers. The octamer wraps approximately 147 bp of DNA. Phosphorylation on Ser-2 is enhanced during mitosis. Phosphorylation on Ser-2 directly represses transcription.

The protein localises to the nucleus. Its subcellular location is the chromosome. Core component of nucleosome. Nucleosomes wrap and compact DNA into chromatin, limiting DNA accessibility to the cellular machineries which require DNA as a template. Histones thereby play a central role in transcription regulation, DNA repair, DNA replication and chromosomal stability. DNA accessibility is regulated via a complex set of post-translational modifications of histones, also called histone code, and nucleosome remodeling. In terms of biological role, acipensins are antimicrobial peptides. Acipensins 1 and 2 have antibacterial activity against Gram-positive bacteria L.monocytogenes EGD (MIC are 1.1 uM and 1.0 uM, respectively) and S.aureus ATCC 33591 (MIC are 0.9 uM and 0.6 uM, respectively), against Gram-negative bacterium E.coli ML-35p (MIC are 0.7 uM and 0.3 uM, respectively) and antifungal activity against C.albicans 820 (MIC are 1.0 uM and 0.9 uM, respectively). Acipensin 6 has antibacterial activity against Gram-negative bacterium E.coli ML-35p (MIC=2.5 uM). Antimicrobial activity is reduced by high ionic strength. Acipensins 1, 2 and 6 have no hemolytic (up to 40 uM) or cytotoxic (up to 20 uM) effects on human cells in vitro. The protein is Histone H2A of Acipenser gueldenstaedtii (Russian sturgeon).